We begin with the raw amino-acid sequence, 505 residues long: ATP synthase subunit beta (505 aa).

158-165 (GGAGVGKT) contributes to the ATP binding site.

Belongs to the ATPase alpha/beta chains family. As to quaternary structure, F-type ATPases have 2 components, CF(1) - the catalytic core - and CF(0) - the membrane proton channel. CF(1) has five subunits: alpha(3), beta(3), gamma(1), delta(1), epsilon(1). CF(0) has three main subunits: a(1), b(2) and c(9-12). The alpha and beta chains form an alternating ring which encloses part of the gamma chain. CF(1) is attached to CF(0) by a central stalk formed by the gamma and epsilon chains, while a peripheral stalk is formed by the delta and b chains.

Its subcellular location is the cell inner membrane. It carries out the reaction ATP + H2O + 4 H(+)(in) = ADP + phosphate + 5 H(+)(out). In terms of biological role, produces ATP from ADP in the presence of a proton gradient across the membrane. The catalytic sites are hosted primarily by the beta subunits. This chain is ATP synthase subunit beta, found in Parabacteroides distasonis (strain ATCC 8503 / DSM 20701 / CIP 104284 / JCM 5825 / NCTC 11152).